A 724-amino-acid chain; its full sequence is Golgin subfamily A member 6-like protein 6 (724 aa).

Disordered regions lie at residues 1-108 (MLMW…HQEA), 314-342 (QEEK…MRRQ), 374-454 (MHEQ…EMWR), 517-548 (QEEM…KMWR), and 561-724 (WRQE…MQEH). Residues 15-29 (LPTHPHLPTHPHLPT) are compositionally biased toward basic residues. The segment covering 39 to 60 (MSKETRQSKLAEAKEQLTDHHP) has biased composition (basic and acidic residues). 2 stretches are compositionally biased toward polar residues: residues 61-71 (QTNPSVGTAAS) and 79-91 (NNGT…TSGG). Positions 94–108 (SPEDEQKASHQHQEA) are enriched in basic and acidic residues. A coiled-coil region spans residues 164–686 (ELEQALSAVA…EKMWEQEEKM (523 aa)).

Belongs to the GOLGA6 family.

In Homo sapiens (Human), this protein is Golgin subfamily A member 6-like protein 6 (GOLGA6L6).